Consider the following 199-residue polypeptide: Recombination protein RecR (199 aa).

The C4-type zinc finger occupies 58–73; it reads CSVCFTLSDTPVCAIC. The 96-residue stretch at 81–176 folds into the Toprim domain; sequence SLLCVVEGPT…TVTRIASGMP (96 aa).

This sequence belongs to the RecR family.

May play a role in DNA repair. It seems to be involved in an RecBC-independent recombinational process of DNA repair. It may act with RecF and RecO. In Desulfosudis oleivorans (strain DSM 6200 / JCM 39069 / Hxd3) (Desulfococcus oleovorans), this protein is Recombination protein RecR.